A 139-amino-acid polypeptide reads, in one-letter code: METDCNPMELSSMSGFEEGSELNGFEGTDMKDMRLEAEAVVNDVLFAVNNMFVSKSLRCADDVAYINVETKERNRYCLELTEAGLKVVGYAFDQVDDHLQTPYHETVYSLLDTLSPAYREAFGNALLQRLEALKRDGQS.

The segment at 1 to 22 is disordered; that stretch reads METDCNPMELSSMSGFEEGSEL. The required for PRKAR2A interaction; contributes to a protective effect against H(2)O(2)-induced apoptosis stretch occupies residues 41 to 45; sequence VNDVL. The interval 115–139 is interaction with GSK3B and acts as a GSK3B inhibitor; that stretch reads SPAYREAFGNALLQRLEALKRDGQS.

It belongs to the GSKIP family. In terms of assembly, forms a complex composed of PRKAR2A or PRKAR2B, GSK3B and GSKIP through GSKIP interaction; facilitates PKA-induced phosphorylation of GSK3B leading to GSK3B inactivation; recruits DNM1L through GSK3B for PKA-mediated phosphorylation of DNM1L; promotes beta-catenin degradation through GSK3B-induced phosphorylation of beta-catenin; stabilizes beta-catenin and enhances Wnt-induced signaling through PKA-induced phosphorylation of beta-catenin. Interacts with GSK3B; induces GSK3B-mediated phosphorylation of GSKIP and inhibits GSK3B kinase activity. In terms of processing, phosphorylated by GSK3B. Detected in heart, brain, placenta, liver, skeletal muscle, kidney, testis, lung and pancreas.

The protein localises to the cytoplasm. It localises to the nucleus. Its function is as follows. A-kinase anchoring protein for GSK3B and PKA that regulates or facilitates their kinase activity towards their targets. The ternary complex enhances Wnt-induced signaling by facilitating the GSK3B- and PKA-induced phosphorylation of beta-catenin leading to beta-catenin degradation and stabilization respectively. Upon cAMP activation, the ternary complex contributes to neuroprotection against oxidative stress-induced apoptosis by facilitating the PKA-induced phosphorylation of DML1 and PKA-induced inactivation of GSK3B. During neurite outgrowth promotes neuron proliferation; while increases beta-catenin-induced transcriptional activity through GSK3B kinase activity inhibition, reduces N-cadherin level to promote cell cycle progression. This Homo sapiens (Human) protein is GSK3B-interacting protein.